The following is a 123-amino-acid chain: Small ribosomal subunit protein eS8 (123 aa).

Residues 1–38 form a disordered region; sequence MKDQGRSPRKRTGGRRRPNHKKKKHELGKDTVETQVGE. Residues 7-26 are compositionally biased toward basic residues; that stretch reads SPRKRTGGRRRPNHKKKKHE.

As to quaternary structure, part of the 30S ribosomal subunit.

The protein is Small ribosomal subunit protein eS8 (rps8e) of Haloarcula marismortui (strain ATCC 43049 / DSM 3752 / JCM 8966 / VKM B-1809) (Halobacterium marismortui).